The primary structure comprises 340 residues: Annexin A2-B (340 aa).

Residues 2–25 form a P10 binding site region; it reads ALIHEILGKLSLEGNQSSSRQSKL. Ser27 is modified (phosphoserine; by PKC). 4 Annexin repeats span residues 34–105, 106–177, 190–262, and 266–337; these read FDAE…GLIK, TRPQ…ALAK, EKID…NLVQ, and NKPL…NLCG.

This sequence belongs to the annexin family. In terms of assembly, tetramer of 2 light chains (p10 proteins) and 2 heavy chains (p36 proteins). In terms of tissue distribution, adult brain, heart, striated muscle, liver, kidney, and very high levels in skin.

Its subcellular location is the secreted. It is found in the extracellular space. It localises to the extracellular matrix. The protein localises to the basement membrane. Calcium-regulated membrane-binding protein whose affinity for calcium is greatly enhanced by anionic phospholipids. It binds two calcium ions with high affinity. The sequence is that of Annexin A2-B (anxa2-b) from Xenopus laevis (African clawed frog).